The sequence spans 505 residues: ATP synthase subunit alpha, chloroplastic (505 aa).

170–177 (GDRQTGKT) contacts ATP.

Belongs to the ATPase alpha/beta chains family. In terms of assembly, F-type ATPases have 2 components, CF(1) - the catalytic core - and CF(0) - the membrane proton channel. CF(1) has five subunits: alpha(3), beta(3), gamma(1), delta(1), epsilon(1). CF(0) has four main subunits: a, b, b' and c.

The protein resides in the plastid. It is found in the chloroplast thylakoid membrane. The catalysed reaction is ATP + H2O + 4 H(+)(in) = ADP + phosphate + 5 H(+)(out). In terms of biological role, produces ATP from ADP in the presence of a proton gradient across the membrane. The alpha chain is a regulatory subunit. The polypeptide is ATP synthase subunit alpha, chloroplastic (Mesostigma viride (Green alga)).